A 172-amino-acid chain; its full sequence is MLLLPPRPPHPRSSSPEVMDPPPPKTPPFPKAEGPSSTSSSVAGPRPPRLGRHLLIDANGVPYTYTVQLEEEPRGPPQREATPGEPGPRKGYSCPECARVFASPLRLQSHRVSHSDLKPFTCGACGKAFKRSSHLSRHRATHRARAGPPHTCPLCPRRFQDAAELAQHVRLH.

The tract at residues Met-1–Tyr-92 is disordered. Residues Met-19–Pro-30 show a composition bias toward pro residues. A Glycyl lysine isopeptide (Lys-Gly) (interchain with G-Cter in SUMO2) cross-link involves residue Lys-31. The C2H2-type 1 zinc-finger motif lies at Tyr-92–His-114. A Glycyl lysine isopeptide (Lys-Gly) (interchain with G-Cter in SUMO2) cross-link involves residue Lys-118. 2 C2H2-type zinc fingers span residues Phe-120–His-142 and His-150–His-172.

Interacts with SMAD2.

It localises to the nucleus. Involved in the regulation of endothelial cell proliferation and migration. Mediates H(2)O(2)-induced leukocyte chemotaxis by elevating interleukin-8 production and may play a role in inflammation. May be involved in transcriptional regulation. This is Zinc finger protein 580 (Znf580) from Mus musculus (Mouse).